Reading from the N-terminus, the 117-residue chain is Large ribosomal subunit protein uL18 (117 aa).

Basic residues predominate over residues 1–17; it reads MNLSRNKARKVKQKRLR. A disordered region spans residues 1 to 23; the sequence is MNLSRNKARKVKQKRLRAKSELS.

The protein belongs to the universal ribosomal protein uL18 family. As to quaternary structure, part of the 50S ribosomal subunit; part of the 5S rRNA/L5/L18/L25 subcomplex. Contacts the 5S and 23S rRNAs.

This is one of the proteins that bind and probably mediate the attachment of the 5S RNA into the large ribosomal subunit, where it forms part of the central protuberance. This Mycoplasmopsis synoviae (strain 53) (Mycoplasma synoviae) protein is Large ribosomal subunit protein uL18.